The following is a 368-amino-acid chain: Phosphoserine aminotransferase (368 aa).

An L-glutamate-binding site is contributed by Arg-44. Pyridoxal 5'-phosphate contacts are provided by residues Ala-78–Thr-79, Trp-104, Thr-157, Asp-179, and Gln-202. Lys-203 is subject to N6-(pyridoxal phosphate)lysine. Asn-244 to Thr-245 serves as a coordination point for pyridoxal 5'-phosphate.

This sequence belongs to the class-V pyridoxal-phosphate-dependent aminotransferase family. SerC subfamily. As to quaternary structure, homodimer. The cofactor is pyridoxal 5'-phosphate.

It localises to the cytoplasm. It catalyses the reaction O-phospho-L-serine + 2-oxoglutarate = 3-phosphooxypyruvate + L-glutamate. The catalysed reaction is 4-(phosphooxy)-L-threonine + 2-oxoglutarate = (R)-3-hydroxy-2-oxo-4-phosphooxybutanoate + L-glutamate. It participates in amino-acid biosynthesis; L-serine biosynthesis; L-serine from 3-phospho-D-glycerate: step 2/3. The protein operates within cofactor biosynthesis; pyridoxine 5'-phosphate biosynthesis; pyridoxine 5'-phosphate from D-erythrose 4-phosphate: step 3/5. In terms of biological role, catalyzes the reversible conversion of 3-phosphohydroxypyruvate to phosphoserine and of 3-hydroxy-2-oxo-4-phosphonooxybutanoate to phosphohydroxythreonine. The chain is Phosphoserine aminotransferase from Neisseria meningitidis serogroup C / serotype 2a (strain ATCC 700532 / DSM 15464 / FAM18).